The primary structure comprises 349 residues: Eukaryotic translation initiation factor 3 subunit I (349 aa).

6 WD repeats span residues 8-49 (GHER…GTLE), 51-91 (HIGT…QSWE), 93-135 (PTPV…DYTK), 148-187 (SDAK…FIET), 197-239 (EKIA…KVYK), and 295-336 (GHFG…FEFD).

It belongs to the eIF-3 subunit I family. Component of the eukaryotic translation initiation factor 3 (eIF-3) complex.

The protein resides in the cytoplasm. Component of the eukaryotic translation initiation factor 3 (eIF-3) complex, which is involved in protein synthesis of a specialized repertoire of mRNAs and, together with other initiation factors, stimulates binding of mRNA and methionyl-tRNAi to the 40S ribosome. The eIF-3 complex specifically targets and initiates translation of a subset of mRNAs involved in cell proliferation. The polypeptide is Eukaryotic translation initiation factor 3 subunit I (Debaryomyces hansenii (strain ATCC 36239 / CBS 767 / BCRC 21394 / JCM 1990 / NBRC 0083 / IGC 2968) (Yeast)).